Consider the following 896-residue polypeptide: Cytokine receptor common subunit beta (896 aa).

Positions 1 to 22 (MDQQMALTWGLCYMALVALCWG) are cleaved as a signal peptide. Over 23-441 (HGVTEAEETV…SEEYTWKTDW (419 aa)) the chain is Extracellular. A disulfide bond links cysteine 39 and cysteine 49. Asparagine 62 carries an N-linked (GlcNAc...) asparagine glycan. Cystine bridges form between cysteine 77-cysteine 99 and cysteine 88-cysteine 94. A Fibronectin type-III 1 domain is found at 136-243 (PPLPKNVSIS…PEVHWDSQPG (108 aa)). Residue asparagine 141 is glycosylated (N-linked (GlcNAc...) asparagine). A compositionally biased stretch (low complexity) spans 220–233 (SPGSSLSGRPSRWS). Positions 220-243 (SPGSSLSGRPSRWSPEVHWDSQPG) are disordered. Intrachain disulfides connect cysteine 253–cysteine 263 and cysteine 292–cysteine 310. The 97-residue stretch at 343–439 (QMEPPTLNLT…KWSEEYTWKT (97 aa)) folds into the Fibronectin type-III 2 domain. Residue asparagine 350 is glycosylated (N-linked (GlcNAc...) asparagine). The short motif at 428-432 (WSKWS) is the WSXWS motif element. A helical transmembrane segment spans residues 442–463 (VMPTLWIVLILVFLILTLLLIL). At 464-896 (RFGCVSVYRT…WDNSQSGKVC (433 aa)) the chain is on the cytoplasmic side. Positions 477–485 (WKEKIPNPS) match the Box 1 motif motif. Disordered stretches follow at residues 543 to 620 (EDPN…GGSL) and 658 to 725 (CGSS…TGPL). 2 stretches are compositionally biased toward polar residues: residues 555 to 571 (PDTTPAASSESTEQLPN) and 658 to 668 (CGSSLETSGSP). Over residues 716–725 (PVLTLPTGPL) the composition is skewed to low complexity. 2 positions are modified to phosphoserine: serine 752 and serine 754. Position 765 is a phosphotyrosine (tyrosine 765). Residues 771 to 810 (SVSQAAKSPPGHPAPPVASSPTVIPGEPREEVGPASPHPE) are disordered.

The protein belongs to the type I cytokine receptor family. Type 4 subfamily. Heterodimer of an alpha and a beta subunit. The beta subunit is common to the IL3, IL5 and GM-CSF receptors. The signaling GM-CSF receptor complex is a dodecamer of two head-to-head hexamers of two alpha, two beta, and two ligand subunits. Interacts with TMEM102; this interaction occurs preferentially in the absence of CSF2. Interacts with FCER1G; this interaction is direct. Interacts with LYN. In terms of processing, may be phosphorylated by LYN.

It is found in the membrane. Functionally, high affinity receptor for interleukin-3, interleukin-5 and granulocyte-macrophage colony-stimulating factor. The polypeptide is Cytokine receptor common subunit beta (Csf2rb) (Mus musculus (Mouse)).